The chain runs to 1664 residues: Peroxisome proliferator-activated receptor gamma coactivator-related protein 1 (1664 aa).

Disordered regions lie at residues 1–44 (MAAR…GTLG), 167–255 (LLTL…VASF), 436–555 (PVVP…EGPL), 681–701 (VDPV…VSSA), 735–793 (IESG…ADIP), 818–873 (CLVP…PTPP), and 1045–1068 (HGAP…HPKH). Over residues 12–22 (APPPSGGPGPD) the composition is skewed to pro residues. Residues 23-32 (PGGGARGSGW) are compositionally biased toward gly residues. Positions 201–224 (SLPDPSWDFSPPSFLETSSPKLPS) are enriched in low complexity. A Phosphoserine modification is found at Ser-237. Residues 433–467 (VVEPVVPKEPQNPPANAAPGSQRARKGRKKKSKEQ) form a necessary for interaction with CREB1 and NRF1 and for transcriptional coactivation region. Residues 455–464 (RARKGRKKKS) are compositionally biased toward basic residues. Residues 482–499 (SSRGQSTVGTEVTSQVDN) are compositionally biased toward polar residues. Positions 522-531 (RAWARAWAAA) are enriched in low complexity. Residues 533-549 (ENSSPKNLERSAGQSSP) are compositionally biased toward polar residues. Residues Ser-536 and Ser-548 each carry the phosphoserine modification. The segment covering 823–836 (GPSPASPSPEPPVS) has biased composition (pro residues). The span at 862–873 (VQSVSPAVPTPP) shows a compositional bias: low complexity. Ser-1076 is modified (phosphoserine). 3 disordered regions span residues 1093–1130 (EEPA…STVP), 1182–1209 (SEAK…DIPQ), and 1334–1528 (VLSL…DHYQ). Positions 1096–1113 (ASERLKPETQETRPREKP) are enriched in basic and acidic residues. Residues 1365–1383 (PSAPCLAPSSLLSPEASPC) show a composition bias toward low complexity. Positions 1379 to 1450 (EASPCRNDMN…SSSSSSSSSS (72 aa)) are necessary for interaction with CREB1 and NRF1. Positions 1400–1409 (RSMRCYRKAC) are enriched in basic residues. A phosphoserine mark is found at Ser-1411 and Ser-1413. Composition is skewed to low complexity over residues 1427 to 1459 (SRSV…RSLS) and 1468 to 1500 (SSCS…SSSR). Residues 1501–1519 (SRSRSPSPRRRSDRRRRYS) show a composition bias toward basic residues. Positions 1543–1619 (RVVFIGKIPG…QPFDLCFGGR (77 aa)) constitute an RRM domain.

Interacts with CREB1 and NRF1. As to expression, strongly expressed in heart and skeletal muscle, moderately in lung, placenta, intestine, liver, kidney, spleen, thymus, colon and brain. Also expressed in several oncocytic thyroid tumors.

The protein resides in the nucleus. In terms of biological role, acts as a coactivator during transcriptional activation of nuclear genes related to mitochondrial biogenesis and cell growth. Involved in the transcription coactivation of CREB and NRF1 target genes. The sequence is that of Peroxisome proliferator-activated receptor gamma coactivator-related protein 1 (PPRC1) from Homo sapiens (Human).